The chain runs to 637 residues: 1-deoxy-D-xylulose-5-phosphate synthase (637 aa).

Residues H76 and 117–119 (GHS) each bind thiamine diphosphate. D148 serves as a coordination point for Mg(2+). Residues 149–150 (GA), N177, Y294, and E381 contribute to the thiamine diphosphate site. N177 provides a ligand contact to Mg(2+).

Belongs to the transketolase family. DXPS subfamily. In terms of assembly, homodimer. Mg(2+) serves as cofactor. Requires thiamine diphosphate as cofactor.

The catalysed reaction is D-glyceraldehyde 3-phosphate + pyruvate + H(+) = 1-deoxy-D-xylulose 5-phosphate + CO2. It functions in the pathway metabolic intermediate biosynthesis; 1-deoxy-D-xylulose 5-phosphate biosynthesis; 1-deoxy-D-xylulose 5-phosphate from D-glyceraldehyde 3-phosphate and pyruvate: step 1/1. Functionally, catalyzes the acyloin condensation reaction between C atoms 2 and 3 of pyruvate and glyceraldehyde 3-phosphate to yield 1-deoxy-D-xylulose-5-phosphate (DXP). In Neisseria meningitidis serogroup B (strain ATCC BAA-335 / MC58), this protein is 1-deoxy-D-xylulose-5-phosphate synthase.